The chain runs to 1172 residues: Putative cadmium/zinc-transporting ATPase HMA4 (1172 aa).

At 1-93 the chain is on the cytoplasmic side; sequence MALQNKEEEK…VRVNGETSFK (93 aa). Positions 17–83 constitute an HMA domain; the sequence is QKSYFDVLGI…ALNEARLEAN (67 aa). Residues 94–115 traverse the membrane as a helical segment; that stretch reads NKWPSPFAVVSGLLLLLSFLKF. Residues 116–118 are Extracellular-facing; it reads VYS. A helical membrane pass occupies residues 119–138; sequence PLRWLAVAAVAAGIYPILAK. The Cytoplasmic portion of the chain corresponds to 139 to 145; sequence AFASIKR. Residues 146–166 form a helical membrane-spanning segment; it reads PRIDINILVIITVIATLAMQD. Phe-167 is a topological domain (extracellular). The helical transmembrane segment at 168–188 threads the bilayer; that stretch reads MEAAAVVFLFTISDWLETRAS. Over 189-314 the chain is Cytoplasmic; the sequence is YKATSVMQSL…KTKSQRLIDK (126 aa). A helical membrane pass occupies residues 315–337; that stretch reads CSQYYTPAIILVSACVAIVPVIM. Topologically, residues 338–345 are extracellular; the sequence is KVHNLKHW. The helical transmembrane segment at 346–363 threads the bilayer; sequence FHLALVVLVSGCPCGLIL. The Cytoplasmic portion of the chain corresponds to 364–656; the sequence is STPVATFCAL…KLARRARRKV (293 aa). Residue Asp-401 is the 4-aspartylphosphate intermediate of the active site. Residues Asp-601 and Asp-605 each coordinate Mg(2+). A helical transmembrane segment spans residues 657 to 676; that stretch reads VENVCLSIILKAGILALAFA. The Extracellular portion of the chain corresponds to 677-680; the sequence is GHPL. Residues 681 to 700 form a helical membrane-spanning segment; the sequence is IWAAVLVDVGTCLLVIFNSM. The Cytoplasmic segment spans residues 701–1172; that stretch reads LLLREKKKIG…HHHHHHHVSA (472 aa).

Belongs to the cation transport ATPase (P-type) (TC 3.A.3) family. Type IB subfamily.

Its subcellular location is the membrane. The catalysed reaction is Zn(2+)(in) + ATP + H2O = Zn(2+)(out) + ADP + phosphate + H(+). It carries out the reaction Cd(2+)(in) + ATP + H2O = Cd(2+)(out) + ADP + phosphate + H(+). Its function is as follows. Involved in cadmium/zinc transport. This chain is Putative cadmium/zinc-transporting ATPase HMA4 (HMA4), found in Arabidopsis thaliana (Mouse-ear cress).